Consider the following 179-residue polypeptide: Large ribosomal subunit protein uL6 (179 aa).

The protein belongs to the universal ribosomal protein uL6 family. Part of the 50S ribosomal subunit.

Functionally, this protein binds to the 23S rRNA, and is important in its secondary structure. It is located near the subunit interface in the base of the L7/L12 stalk, and near the tRNA binding site of the peptidyltransferase center. This chain is Large ribosomal subunit protein uL6, found in Crocosphaera subtropica (strain ATCC 51142 / BH68) (Cyanothece sp. (strain ATCC 51142)).